A 311-amino-acid polypeptide reads, in one-letter code: Aspartate carbamoyltransferase catalytic subunit (311 aa).

Carbamoyl phosphate is bound by residues Arg-55 and Thr-56. Lys-85 lines the L-aspartate pocket. Carbamoyl phosphate contacts are provided by Arg-106, His-135, and Gln-138. Residues Arg-168 and Arg-230 each contribute to the L-aspartate site. 2 residues coordinate carbamoyl phosphate: Leu-268 and Pro-269.

The protein belongs to the aspartate/ornithine carbamoyltransferase superfamily. ATCase family. Heterododecamer (2C3:3R2) of six catalytic PyrB chains organized as two trimers (C3), and six regulatory PyrI chains organized as three dimers (R2).

The enzyme catalyses carbamoyl phosphate + L-aspartate = N-carbamoyl-L-aspartate + phosphate + H(+). It participates in pyrimidine metabolism; UMP biosynthesis via de novo pathway; (S)-dihydroorotate from bicarbonate: step 2/3. Catalyzes the condensation of carbamoyl phosphate and aspartate to form carbamoyl aspartate and inorganic phosphate, the committed step in the de novo pyrimidine nucleotide biosynthesis pathway. The polypeptide is Aspartate carbamoyltransferase catalytic subunit (Escherichia fergusonii (strain ATCC 35469 / DSM 13698 / CCUG 18766 / IAM 14443 / JCM 21226 / LMG 7866 / NBRC 102419 / NCTC 12128 / CDC 0568-73)).